Reading from the N-terminus, the 583-residue chain is Propane 2-monooxygenase operon transcriptional activator MimR (583 aa).

The Sigma-54 factor interaction domain maps to 320–513 (LAGQSSSFRR…LRHVLTETVR (194 aa)). Residues 349 to 356 (ERGSGRTY) and 395 to 404 (SADFAVIVSD) each bind ATP.

In terms of biological role, acts as a transcriptional activator of the mimABCD operon encoding the propane 2-monooxygenase complex. This chain is Propane 2-monooxygenase operon transcriptional activator MimR, found in Mycolicibacterium smegmatis (strain ATCC 700084 / mc(2)155) (Mycobacterium smegmatis).